We begin with the raw amino-acid sequence, 695 residues long: ATP-dependent zinc metalloprotease FTSH 2, chloroplastic (695 aa).

Residues 1–47 (MAASSACLVGNGLSVNTTTKQRLSKHFSGRQTSFSSVIRTSKVNVVK) constitute a chloroplast transit peptide. Residues 48-82 (ASLDGKKKQEGRRDFLKILLGNAGVGLVASGKANA) constitute a thylakoid transit peptide. Residues 83–167 (DEQGVSSSRM…AHNAQEDQGS (85 aa)) are Lumenal, thylakoid-facing. Residues 168 to 188 (VLFNLIGNLAFPALLIGGLFL) traverse the membrane as a helical segment. Residues 189–695 (LSRRSGGGMG…PASAPTPAAV (507 aa)) are Stromal-facing. Residue 267 to 274 (GPPGTGKT) participates in ATP binding. Zn(2+) is bound at residue histidine 488. The active site involves glutamate 489. Zn(2+)-binding residues include histidine 492 and aspartate 566. The disordered stretch occupies residues 673-695 (PPENRVPSSTTTTPASAPTPAAV). Low complexity predominate over residues 679–695 (PSSTTTTPASAPTPAAV).

In the N-terminal section; belongs to the AAA ATPase family. This sequence in the C-terminal section; belongs to the peptidase M41 family. As to quaternary structure, interacts with CHIP and FTSH5. Heterohexamers with FTSH1, FTSH5 and FTSH8. May also form homooligomers. Zn(2+) is required as a cofactor. Post-translationally, the FTSH2 precursor is ubiquitinated by CHIP in the cytoplasm. As to expression, expressed in cotyledons, cauline and rosette leaves, stems, sepals, flovers and siliques. Very low in roots.

Its subcellular location is the plastid. It is found in the chloroplast thylakoid membrane. Its function is as follows. Part of a complex that function as an ATP-dependent zinc metallopeptidase. Involved in the thylakoid formation and in the removal of damaged D1 in the photosystem II, preventing cell death under high-intensity light conditions, but not involved in thermotolerance. The polypeptide is ATP-dependent zinc metalloprotease FTSH 2, chloroplastic (FTSH2) (Arabidopsis thaliana (Mouse-ear cress)).